Consider the following 114-residue polypeptide: Transmembrane protein 14C (114 aa).

4 consecutive transmembrane segments (helical) span residues 8–28 (LMPL…GGII), 33–53 (AGSV…GLGA), 63–83 (VWVF…RFYN), and 89–109 (PAGL…ISLL).

Belongs to the TMEM14 family.

It localises to the mitochondrion membrane. In terms of biological role, required for normal heme biosynthesis. The chain is Transmembrane protein 14C (Tmem14c) from Mus musculus (Mouse).